A 253-amino-acid polypeptide reads, in one-letter code: Triosephosphate isomerase, cytosolic (253 aa).

Substrate contacts are provided by Asn10 and Lys12. His96 serves as the catalytic Electrophile. Glu166 (proton acceptor) is an active-site residue.

It belongs to the triosephosphate isomerase family. Homodimer.

The protein resides in the cytoplasm. It catalyses the reaction D-glyceraldehyde 3-phosphate = dihydroxyacetone phosphate. The protein operates within carbohydrate biosynthesis; gluconeogenesis. It functions in the pathway carbohydrate degradation; glycolysis; D-glyceraldehyde 3-phosphate from glycerone phosphate: step 1/1. This is Triosephosphate isomerase, cytosolic (TPI) from Oryza sativa subsp. japonica (Rice).